The sequence spans 108 residues: T-cell acute lymphocytic leukemia protein 2 homolog (108 aa).

Positions 2–54 (TRKIFTNTRERWRQQSVNNAFAKLRKLIPTHPPDKKLSKNETLRLAMRYINFL) constitute a bHLH domain. A disordered region spans residues 76-108 (GLFPPKTRLPDEDDRTLLNDYRVPSPGPSHGAP).

The sequence is that of T-cell acute lymphocytic leukemia protein 2 homolog (Tal2) from Mus musculus (Mouse).